The primary structure comprises 400 residues: 3-phenylpropionate/cinnamic acid dioxygenase ferredoxin--NAD(+) reductase component (400 aa).

FAD is bound at residue Thr5–Asp36. Ser146–Glu174 lines the NAD(+) pocket.

The protein belongs to the bacterial ring-hydroxylating dioxygenase ferredoxin reductase family. As to quaternary structure, this dioxygenase system consists of four proteins: the two subunits of the hydroxylase component (HcaE and HcaF), a ferredoxin (HcaC) and a ferredoxin reductase (HcaD). The cofactor is FAD.

It carries out the reaction 2 reduced [2Fe-2S]-[ferredoxin] + NAD(+) + H(+) = 2 oxidized [2Fe-2S]-[ferredoxin] + NADH. The protein operates within aromatic compound metabolism; 3-phenylpropanoate degradation. Functionally, part of the multicomponent 3-phenylpropionate dioxygenase, that converts 3-phenylpropionic acid (PP) and cinnamic acid (CI) into 3-phenylpropionate-dihydrodiol (PP-dihydrodiol) and cinnamic acid-dihydrodiol (CI-dihydrodiol), respectively. This Escherichia coli (strain K12 / MC4100 / BW2952) protein is 3-phenylpropionate/cinnamic acid dioxygenase ferredoxin--NAD(+) reductase component.